Reading from the N-terminus, the 422-residue chain is GTPase Obg (422 aa).

One can recognise an Obg domain in the interval 2–157; sequence AKFIDEIKLT…YLAHIVLKVM (156 aa). Residues 158-325 form the OBG-type G domain; that stretch reads SDVGIIGKPS…LKGKIWKILE (168 aa). GTP-binding positions include 164–171, 189–193, 210–213, 279–282, and 306–308; these read GKPSAGKS, FTTLV, DLPG, NKSD, and SAI. Positions 171 and 191 each coordinate Mg(2+). The OCT domain occupies 334–420; the sequence is EEEETEENVE…ILDYEFEWDG (87 aa).

This sequence belongs to the TRAFAC class OBG-HflX-like GTPase superfamily. OBG GTPase family. As to quaternary structure, monomer. The cofactor is Mg(2+).

Its subcellular location is the cytoplasm. In terms of biological role, an essential GTPase which binds GTP, GDP and possibly (p)ppGpp with moderate affinity, with high nucleotide exchange rates and a fairly low GTP hydrolysis rate. Plays a role in control of the cell cycle, stress response, ribosome biogenesis and in those bacteria that undergo differentiation, in morphogenesis control. In Mycoplasmopsis agalactiae (strain NCTC 10123 / CIP 59.7 / PG2) (Mycoplasma agalactiae), this protein is GTPase Obg.